We begin with the raw amino-acid sequence, 318 residues long: Homoserine kinase (318 aa).

97–107 (PIGSGLGSSAC) serves as a coordination point for ATP.

It belongs to the GHMP kinase family. Homoserine kinase subfamily.

It localises to the cytoplasm. It catalyses the reaction L-homoserine + ATP = O-phospho-L-homoserine + ADP + H(+). The protein operates within amino-acid biosynthesis; L-threonine biosynthesis; L-threonine from L-aspartate: step 4/5. Functionally, catalyzes the ATP-dependent phosphorylation of L-homoserine to L-homoserine phosphate. This Vibrio atlanticus (strain LGP32) (Vibrio splendidus (strain Mel32)) protein is Homoserine kinase.